Consider the following 505-residue polypeptide: Glucan endo-1,3-beta-glucosidase 2 (505 aa).

The first 20 residues, 1–20 (MASLLHLLLLSLSLLVLASA), serve as a signal peptide directing secretion. Residue N97 is glycosylated (N-linked (GlcNAc...) asparagine). E125 acts as the Proton donor in catalysis. N-linked (GlcNAc...) asparagine glycans are attached at residues N180 and N262. The active-site Nucleophile is E272. 3 N-linked (GlcNAc...) asparagine glycosylation sites follow: N304, N361, and N365. Cysteines 369 and 432 form a disulfide. N-linked (GlcNAc...) asparagine glycosylation is found at N461, N466, and N473. A lipid anchor (GPI-anchor amidated serine) is attached at S477. Residues 478 to 505 (SGIRSDLYYSRGIWSILTVMILNVANIL) constitute a propeptide, removed in mature form.

It belongs to the glycosyl hydrolase 17 family. Contains two additional disulfide bonds.

Its subcellular location is the cell membrane. It carries out the reaction Hydrolysis of (1-&gt;3)-beta-D-glucosidic linkages in (1-&gt;3)-beta-D-glucans.. The polypeptide is Glucan endo-1,3-beta-glucosidase 2 (Arabidopsis thaliana (Mouse-ear cress)).